Consider the following 320-residue polypeptide: MENFPIINLEKLNGSERDATMEMIKDACENWGFFELVNHGIPHEVMDTVEKLTKGHYKKCMEQRFKELVASKGLEAVQAEVTDLDWESTFFLRHLPVSNISEVPDLDDEYREVMRDFAKRLEKLAEELLDLLCENLGLEKGYLKKAFYGSKGPNFGTKVSNYPPCPKPDLIKGLRAHTDAGGIILLFQDDKVSGLQLLKDGQWIDVPPMRHSIVVNLGDQLEVITNGKYKSVLHRVIAQTDGTRMSLASFYNPGSDAVIYPAPTLVEKEADQECKQVYPKFVFDDYMKLYAGLKFQAKEPRFEAMKAREADVKSDPIATA.

Positions 153-253 constitute a Fe2OG dioxygenase domain; that stretch reads PNFGTKVSNY…RMSLASFYNP (101 aa). Residues H177, D179, and H234 each coordinate Fe cation.

It belongs to the iron/ascorbate-dependent oxidoreductase family. Fe cation is required as a cofactor.

The catalysed reaction is 1-aminocyclopropane-1-carboxylate + L-ascorbate + O2 = ethene + L-dehydroascorbate + hydrogen cyanide + CO2 + 2 H2O. It participates in alkene biosynthesis; ethylene biosynthesis via S-adenosyl-L-methionine; ethylene from S-adenosyl-L-methionine: step 2/2. The chain is 1-aminocyclopropane-1-carboxylate oxidase 3 (ACO3) from Petunia hybrida (Petunia).